Here is a 78-residue protein sequence, read N- to C-terminus: uncharacterized protein (78 aa).

This is an uncharacterized protein from Bacillus subtilis (strain 168).